The chain runs to 355 residues: UDP-N-acetylglucosamine--N-acetylmuramyl-(pentapeptide) pyrophosphoryl-undecaprenol N-acetylglucosamine transferase (355 aa).

UDP-N-acetyl-alpha-D-glucosamine-binding positions include 13–15 (TGG), Asn-125, Arg-162, Ser-190, Ile-244, and Gln-289.

It belongs to the glycosyltransferase 28 family. MurG subfamily.

It localises to the cell inner membrane. It carries out the reaction di-trans,octa-cis-undecaprenyl diphospho-N-acetyl-alpha-D-muramoyl-L-alanyl-D-glutamyl-meso-2,6-diaminopimeloyl-D-alanyl-D-alanine + UDP-N-acetyl-alpha-D-glucosamine = di-trans,octa-cis-undecaprenyl diphospho-[N-acetyl-alpha-D-glucosaminyl-(1-&gt;4)]-N-acetyl-alpha-D-muramoyl-L-alanyl-D-glutamyl-meso-2,6-diaminopimeloyl-D-alanyl-D-alanine + UDP + H(+). It participates in cell wall biogenesis; peptidoglycan biosynthesis. In terms of biological role, cell wall formation. Catalyzes the transfer of a GlcNAc subunit on undecaprenyl-pyrophosphoryl-MurNAc-pentapeptide (lipid intermediate I) to form undecaprenyl-pyrophosphoryl-MurNAc-(pentapeptide)GlcNAc (lipid intermediate II). The protein is UDP-N-acetylglucosamine--N-acetylmuramyl-(pentapeptide) pyrophosphoryl-undecaprenol N-acetylglucosamine transferase of Neisseria meningitidis serogroup C (strain 053442).